Here is a 252-residue protein sequence, read N- to C-terminus: Chitooligosaccharide deacetylase (252 aa).

His125 contacts Mg(2+).

Belongs to the YdjC deacetylase family. ChbG subfamily. In terms of assembly, homodimer. Requires Mg(2+) as cofactor.

The protein resides in the cytoplasm. It catalyses the reaction N,N'-diacetylchitobiose + H2O = N-acetyl-beta-D-glucosaminyl-(1-&gt;4)-D-glucosamine + acetate. It carries out the reaction diacetylchitobiose-6'-phosphate + H2O = N'-monoacetylchitobiose-6'-phosphate + acetate. It participates in glycan degradation; chitin degradation. In terms of biological role, involved in the degradation of chitin. ChbG is essential for growth on the acetylated chitooligosaccharides chitobiose and chitotriose but is dispensable for growth on cellobiose and chitosan dimer, the deacetylated form of chitobiose. Deacetylation of chitobiose-6-P and chitotriose-6-P is necessary for both the activation of the chb promoter by the regulatory protein ChbR and the hydrolysis of phosphorylated beta-glucosides by the phospho-beta-glucosidase ChbF. Catalyzes the removal of only one acetyl group from chitobiose-6-P to yield monoacetylchitobiose-6-P, the inducer of ChbR and the substrate of ChbF. This chain is Chitooligosaccharide deacetylase, found in Escherichia coli O157:H7.